Consider the following 88-residue polypeptide: RNA-binding protein Hfq (88 aa).

The region spanning 10–70 is the Sm domain; the sequence is DRFLNILRTK…ISTILPAEYI (61 aa).

The protein belongs to the Hfq family. As to quaternary structure, homohexamer.

In terms of biological role, RNA chaperone that binds small regulatory RNA (sRNAs) and mRNAs to facilitate mRNA translational regulation in response to envelope stress, environmental stress and changes in metabolite concentrations. Also binds with high specificity to tRNAs. This chain is RNA-binding protein Hfq, found in Fervidobacterium nodosum (strain ATCC 35602 / DSM 5306 / Rt17-B1).